Reading from the N-terminus, the 436-residue chain is Putative UDP-arabinose 4-epimerase 4 (436 aa).

Positions 1–20 (MLNSSGVRTQRRSPRPLSLG) are disordered. Topologically, residues 1–60 (MLNSSGVRTQRRSPRPLSLGGRKIITPTKFAYDHHNPDKVLDFVEMDCLEPKTKNNLTGK) are cytoplasmic. The chain crosses the membrane as a helical; Signal-anchor for type II membrane protein span at residues 61–81 (LLLVASLLILAIIVISQSSSF). Residues 82–436 (TSPSAFSQRE…KIHPHGYNSY (355 aa)) lie on the Lumenal side of the membrane. Position 96–127 (96–127 (HVLVTGGAGYIGSHAALRLLRDSYRVTIVDNL)) interacts with NAD(+). Tyr-244 serves as the catalytic Proton acceptor.

Belongs to the NAD(P)-dependent epimerase/dehydratase family. Requires NAD(+) as cofactor.

It localises to the golgi apparatus. It is found in the golgi stack membrane. The catalysed reaction is UDP-beta-L-arabinopyranose = UDP-alpha-D-xylose. Its pathway is nucleotide-sugar biosynthesis; UDP-L-arabinose biosynthesis; UDP-L-arabinose from UDP-alpha-D-xylose: step 1/1. The protein operates within cell wall biogenesis; cell wall polysaccharide biosynthesis. This chain is Putative UDP-arabinose 4-epimerase 4, found in Arabidopsis thaliana (Mouse-ear cress).